Here is a 135-residue protein sequence, read N- to C-terminus: Transcription antitermination protein NusB (135 aa).

Belongs to the NusB family.

Its function is as follows. Involved in transcription antitermination. Required for transcription of ribosomal RNA (rRNA) genes. Binds specifically to the boxA antiterminator sequence of the ribosomal RNA (rrn) operons. The chain is Transcription antitermination protein NusB from Shewanella pealeana (strain ATCC 700345 / ANG-SQ1).